The chain runs to 273 residues: 4-hydroxybenzoate octaprenyltransferase (273 aa).

Helical transmembrane passes span Ile-7 to Phe-27, Leu-30 to Ile-50, Phe-83 to Ile-103, Trp-122 to Phe-142, Leu-146 to Ile-166, Leu-197 to Phe-217, Ile-221 to Ile-241, and Phe-253 to Leu-273.

Belongs to the UbiA prenyltransferase family. The cofactor is Mg(2+).

It is found in the cell inner membrane. The catalysed reaction is all-trans-octaprenyl diphosphate + 4-hydroxybenzoate = 4-hydroxy-3-(all-trans-octaprenyl)benzoate + diphosphate. It participates in cofactor biosynthesis; ubiquinone biosynthesis. Functionally, catalyzes the prenylation of para-hydroxybenzoate (PHB) with an all-trans polyprenyl group. Mediates the second step in the final reaction sequence of ubiquinone-8 (UQ-8) biosynthesis, which is the condensation of the polyisoprenoid side chain with PHB, generating the first membrane-bound Q intermediate 3-octaprenyl-4-hydroxybenzoate. In Vesicomyosocius okutanii subsp. Calyptogena okutanii (strain HA), this protein is 4-hydroxybenzoate octaprenyltransferase.